A 427-amino-acid polypeptide reads, in one-letter code: Isocitrate lyase (427 aa).

Position 89–91 (Ser89–Trp91) interacts with substrate. Mg(2+) is bound at residue Asp150. Cys188 serves as the catalytic Proton acceptor. Residues Gly189–His190, Arg225, Asn310–Ser314, and Thr344 each bind substrate.

The protein belongs to the isocitrate lyase/PEP mutase superfamily. Isocitrate lyase family. Homotetramer. The cofactor is Mg(2+).

It carries out the reaction D-threo-isocitrate = glyoxylate + succinate. It participates in carbohydrate metabolism; glyoxylate cycle; (S)-malate from isocitrate: step 1/2. Its function is as follows. Involved in the metabolic adaptation in response to environmental changes. Catalyzes the reversible formation of succinate and glyoxylate from isocitrate, a key step of the glyoxylate cycle, which operates as an anaplerotic route for replenishing the tricarboxylic acid cycle during growth on fatty acid substrates. This is Isocitrate lyase (aceA) from Halalkalibacterium halodurans (strain ATCC BAA-125 / DSM 18197 / FERM 7344 / JCM 9153 / C-125) (Bacillus halodurans).